The sequence spans 436 residues: 3-ketoacyl-CoA thiolase (436 aa).

Residue C99 is the Acyl-thioester intermediate of the active site. Residues H392 and C422 each act as proton acceptor in the active site.

It belongs to the thiolase-like superfamily. Thiolase family. In terms of assembly, heterotetramer of two alpha chains (FadJ) and two beta chains (FadI).

The protein localises to the cytoplasm. It carries out the reaction an acyl-CoA + acetyl-CoA = a 3-oxoacyl-CoA + CoA. Its pathway is lipid metabolism; fatty acid beta-oxidation. Functionally, catalyzes the final step of fatty acid oxidation in which acetyl-CoA is released and the CoA ester of a fatty acid two carbons shorter is formed. In Shewanella denitrificans (strain OS217 / ATCC BAA-1090 / DSM 15013), this protein is 3-ketoacyl-CoA thiolase.